A 336-amino-acid chain; its full sequence is Glyceraldehyde-3-phosphate dehydrogenase, chromosomal (336 aa).

Residues 12-13 (RI), aspartate 37, arginine 81, and serine 123 contribute to the NAD(+) site. D-glyceraldehyde 3-phosphate contacts are provided by residues 154–156 (SCT) and threonine 185. The Nucleophile role is filled by cysteine 155. Residue asparagine 186 participates in NAD(+) binding. D-glyceraldehyde 3-phosphate contacts are provided by residues arginine 200, 213–214 (TG), and arginine 236. Asparagine 317 contacts NAD(+).

The protein belongs to the glyceraldehyde-3-phosphate dehydrogenase family. In terms of assembly, homotetramer.

It catalyses the reaction D-glyceraldehyde 3-phosphate + phosphate + NAD(+) = (2R)-3-phospho-glyceroyl phosphate + NADH + H(+). Its pathway is carbohydrate biosynthesis; Calvin cycle. Its function is as follows. Could be involved in carbon fixation as a component of the Calvin cycle. Catalyzes the oxidative phosphorylation of glyceraldehyde 3-phosphate (G3P) to 1,3-bisphosphoglycerate (BPG) using the cofactor NAD. The first reaction step involves the formation of a hemiacetal intermediate between G3P and a cysteine residue, and this hemiacetal intermediate is then oxidized to a thioester, with concomitant reduction of NAD to NADH. The reduced NADH is then exchanged with the second NAD, and the thioester is attacked by a nucleophilic inorganic phosphate to produce BPG. The polypeptide is Glyceraldehyde-3-phosphate dehydrogenase, chromosomal (cbbGC) (Cupriavidus necator (strain ATCC 17699 / DSM 428 / KCTC 22496 / NCIMB 10442 / H16 / Stanier 337) (Ralstonia eutropha)).